The chain runs to 156 residues: Glutamate-rich protein 2 (156 aa).

2 disordered regions span residues 29 to 66 and 116 to 156; these read LQDI…TQAP and EKTQ…EDGS. Acidic residues-rich tracts occupy residues 39-56 and 140-156; these read SAED…DDED and SDEE…EDGS.

The protein is Glutamate-rich protein 2 (ERICH2) of Homo sapiens (Human).